Here is a 1065-residue protein sequence, read N- to C-terminus: Bifunctional cytochrome P450/NADPH--P450 reductase (1065 aa).

The tract at residues 1–479 (MEKKVSAIPQ…EDKLKNDEIK (479 aa)) is cytochrome P450. Position 405 (Cys405) interacts with heme. Positions 480–1065 (QHVQKTPSII…RYGKDVWAGI (586 aa)) are NADPH--P450 reductase. One can recognise a Flavodoxin-like domain in the interval 496 to 635 (LLVLYGSDTG…QLEQWKQNMW (140 aa)). FMN contacts are provided by residues 502 to 507 (SDTGVA), 549 to 552 (SYNG), 583 to 585 (CGD), and 591 to 593 (TYQ). Residues 674 to 907 (YEAVYASILE…RTPQSNFELP (234 aa)) form the FAD-binding FR-type domain.

In the N-terminal section; belongs to the cytochrome P450 family. The cofactor is heme. Requires FAD as cofactor. It depends on FMN as a cofactor.

It carries out the reaction 2 oxidized [cytochrome P450] + NADPH = 2 reduced [cytochrome P450] + NADP(+) + H(+). It catalyses the reaction an organic molecule + reduced [NADPH--hemoprotein reductase] + O2 = an alcohol + oxidized [NADPH--hemoprotein reductase] + H2O + H(+). Functionally, functions as a fatty acid monooxygenase. Catalyzes hydroxylation of fatty acids at omega-1, omega-2 and omega-3 positions, yielding primarily omega-1 and omega-2 hydroxylated products. Metabolizes unsaturated and saturated fatty acids as well as N-acylamino acids. Has a preference for long-chain unsaturated fatty acids over saturated fatty acids. Shows activity toward saturated fatty acids with a chain length of 9-18 carbons with preference for longer fatty acids. Also displays a NADPH-dependent reductase activity in the C-terminal domain, which allows electron transfer from NADPH to the heme iron of the cytochrome P450 N-terminal domain. The protein is Bifunctional cytochrome P450/NADPH--P450 reductase of Bacillus cereus (strain ATCC 14579 / DSM 31 / CCUG 7414 / JCM 2152 / NBRC 15305 / NCIMB 9373 / NCTC 2599 / NRRL B-3711).